Reading from the N-terminus, the 509-residue chain is Coiled-coil domain-containing protein 181 (509 aa).

Over residues glutamate 46–aspartate 82 the composition is skewed to basic and acidic residues. Disordered regions lie at residues glutamate 46–aspartate 120 and proline 241–glutamate 367. Composition is skewed to polar residues over residues asparagine 243–glycine 266 and threonine 300–cysteine 334. Residues leucine 335–valine 375 adopt a coiled-coil conformation. Residues arginine 338–glutamate 367 are compositionally biased toward basic and acidic residues.

Belongs to the CCDC181 family. In terms of assembly, homodimer. Interacts with HOOK1. Interacts with HOOK2. Interacts with HOOK3.

The protein localises to the cytoplasm. The protein resides in the cytoskeleton. Its subcellular location is the cell projection. It is found in the cilium. It localises to the flagellum. Microtubule-binding protein that localizes to the microtubular manchette of elongating spermatids. The chain is Coiled-coil domain-containing protein 181 from Homo sapiens (Human).